The chain runs to 442 residues: D-serine dehydratase 1 (442 aa).

Lysine 118 is modified (N6-(pyridoxal phosphate)lysine).

It belongs to the serine/threonine dehydratase family. DsdA subfamily. As to quaternary structure, monomer. Requires pyridoxal 5'-phosphate as cofactor.

It carries out the reaction D-serine = pyruvate + NH4(+). This Escherichia coli (strain UTI89 / UPEC) protein is D-serine dehydratase 1.